The chain runs to 774 residues: Potassium/sodium hyperpolarization-activated cyclic nucleotide-gated channel 3 (774 aa).

Residues 1–48 (MEAEQRPAAGASEGATPGLEAVPPVAPPPATAASGPIPKSGPEPKRRH) are disordered. The Cytoplasmic segment spans residues 1 to 97 (MEAEQRPAAG…PYSDFRFYWD (97 aa)). Positions 46 to 91 (RRHLGTLLQPTVNKFSLRVFGSHKAVEIEQERVKSAGAWIIHPYSD) are involved in subunit assembly. The helical transmembrane segment at 98–118 (LIMLLLMVGNLIVLPVGITFF) threads the bilayer. Over 119 to 124 (KEENSP) the chain is Extracellular. Residues 125–145 (PWIVFNVLSDTFFLLDLVLNF) form a helical membrane-spanning segment. Over 146-171 (RTGIVVEEGAEILLAPRAIRTRYLRT) the chain is Cytoplasmic. Residues 172 to 192 (WFLVDLISSIPVDYIFLVVEL) traverse the membrane as a helical segment. The Extracellular portion of the chain corresponds to 193-201 (EPRLDAEVY). Residues 202-222 (KTARALRIVRFTKILSLLRLL) traverse the membrane as a helical; Voltage-sensor segment. At 223-253 (RLSRLIRYIHQWEEIFHMTYDLASAVVRIFN) the chain is on the cytoplasmic side. The chain crosses the membrane as a helical span at residues 254 to 274 (LIGMMLLLCHWDGCLQFLVPM). At 275-297 (LQDFPPDCWVSINHMVNHSWGRQ) the chain is on the extracellular side. An N-linked (GlcNAc...) asparagine glycan is attached at asparagine 291. Residues 298 to 319 (YSHALFKAMSHMLCIGYGQQAP) constitute an intramembrane region (pore-forming). Topologically, residues 320-329 (VGMPDVWLTM) are extracellular. Residues 330–350 (LSMIVGATCYAMFIGHATALI) form a helical membrane-spanning segment. At 351–774 (QSLDSSRRQY…PRGLQLSANM (424 aa)) the chain is on the cytoplasmic side. Residues 354 to 774 (DSSRRQYQEK…PRGLQLSANM (421 aa)) form an interaction with KCTD3 region. Residues glycine 492, glutamate 493, cysteine 495, arginine 502, threonine 503, arginine 543, and arginine 546 each coordinate 3',5'-cyclic AMP. At serine 634 the chain carries Phosphoserine. Residues 682–774 (SLSRAGRSQV…PRGLQLSANM (93 aa)) are disordered. Pro residues predominate over residues 751–763 (TAQPPRPPVPEPA).

It belongs to the potassium channel HCN family. Homotetramer. The potassium channel is composed of a homo- or heterotetrameric complex of pore-forming subunits. Interacts with HCN11. Interacts with KCTD3; this interaction increases cell surface expression and current density of this channel. Interacts with PEX5L. As to expression, detected in brain.

It is found in the cell membrane. It carries out the reaction K(+)(in) = K(+)(out). It catalyses the reaction Na(+)(in) = Na(+)(out). Its activity is regulated as follows. Unlike HCN2 and HCN4, HCN3 is insensitive to cyclic nucleotides, such as cAMP or cGMP. This lack of sensitivity of HCN3, despite harboring a functional cyclic nucleotide-binding domain (CNBD), may be explained by its shorter C-terminal sequence, which may alter the normal autoinhibition of the channel. Inhibited by Cs(1+) and ZD7288. Phosphatidylinositol-4,5-bisphosphate (PIP(2)) shifts HCN3 activation to more depolarized potentials and accelerated activation kinetics. Hyperpolarization-activated ion channel that are permeable to sodium and potassium ions, with an about 3:1 preference for potassium ions. Contributes to the native pacemaker currents in heart (If) and in neurons (Ih). In particular, plays a pivotal role in maintaining excitability and promoting rhythmic burst firing within hypothalamic nuclei. Exerts a significant influence on the configuration of the cardiac action potential waveform. Does not appear to play a prominent role in the processing of acute, neuropathic, or inflammatory pain. The sequence is that of Potassium/sodium hyperpolarization-activated cyclic nucleotide-gated channel 3 (HCN3) from Homo sapiens (Human).